The sequence spans 237 residues: Urease subunit alpha (237 aa).

Residues 1 to 102 (MKLTPKELDK…LVTIHTPVED (102 aa)) are urease gamma. A urease beta region spans residues 103-237 (NGKLAPGEVF…CGCEATKDKQ (135 aa)).

It in the N-terminal section; belongs to the urease gamma subunit family. In the C-terminal section; belongs to the urease beta subunit family. In terms of assembly, heterohexamer of 3 UreA (alpha) and 3 UreB (beta) subunits.

The protein localises to the cytoplasm. It carries out the reaction urea + 2 H2O + H(+) = hydrogencarbonate + 2 NH4(+). It functions in the pathway nitrogen metabolism; urea degradation; CO(2) and NH(3) from urea (urease route): step 1/1. This Helicobacter felis protein is Urease subunit alpha.